We begin with the raw amino-acid sequence, 130 residues long: Small ribosomal subunit protein uS9 (130 aa).

It belongs to the universal ribosomal protein uS9 family.

In Ralstonia nicotianae (strain ATCC BAA-1114 / GMI1000) (Ralstonia solanacearum), this protein is Small ribosomal subunit protein uS9.